A 291-amino-acid chain; its full sequence is N-acetylmannosamine kinase (291 aa).

ATP is bound by residues 5-12 (AIDIGGTK) and 132-139 (GVGGGVVC). Zn(2+) is bound by residues His156, Cys166, Cys168, and Cys173.

It belongs to the ROK (NagC/XylR) family. NanK subfamily. Homodimer.

The enzyme catalyses an N-acyl-D-mannosamine + ATP = an N-acyl-D-mannosamine 6-phosphate + ADP + H(+). Its pathway is amino-sugar metabolism; N-acetylneuraminate degradation; D-fructose 6-phosphate from N-acetylneuraminate: step 2/5. Catalyzes the phosphorylation of N-acetylmannosamine (ManNAc) to ManNAc-6-P. The sequence is that of N-acetylmannosamine kinase from Salmonella paratyphi A (strain ATCC 9150 / SARB42).